The sequence spans 451 residues: Methylenetetrahydrofolate--tRNA-(uracil-5-)-methyltransferase TrmFO (451 aa).

Residue 18 to 23 (GGGLAG) coordinates FAD.

Belongs to the MnmG family. TrmFO subfamily. The cofactor is FAD.

It localises to the cytoplasm. The catalysed reaction is uridine(54) in tRNA + (6R)-5,10-methylene-5,6,7,8-tetrahydrofolate + NADH + H(+) = 5-methyluridine(54) in tRNA + (6S)-5,6,7,8-tetrahydrofolate + NAD(+). It catalyses the reaction uridine(54) in tRNA + (6R)-5,10-methylene-5,6,7,8-tetrahydrofolate + NADPH + H(+) = 5-methyluridine(54) in tRNA + (6S)-5,6,7,8-tetrahydrofolate + NADP(+). In terms of biological role, catalyzes the folate-dependent formation of 5-methyl-uridine at position 54 (M-5-U54) in all tRNAs. The polypeptide is Methylenetetrahydrofolate--tRNA-(uracil-5-)-methyltransferase TrmFO (Synechococcus sp. (strain JA-3-3Ab) (Cyanobacteria bacterium Yellowstone A-Prime)).